The sequence spans 157 residues: Protein-export protein SecB (157 aa).

The protein belongs to the SecB family. Homotetramer, a dimer of dimers. One homotetramer interacts with 1 SecA dimer.

Its subcellular location is the cytoplasm. In terms of biological role, one of the proteins required for the normal export of preproteins out of the cell cytoplasm. It is a molecular chaperone that binds to a subset of precursor proteins, maintaining them in a translocation-competent state. It also specifically binds to its receptor SecA. The protein is Protein-export protein SecB of Rhodopseudomonas palustris (strain TIE-1).